Here is a 398-residue protein sequence, read N- to C-terminus: GATA transcription factor 21 (398 aa).

Residues 20-51 (QPFFYPLGSSSSLHHHHHHHHHQVPSNSSSSS) form a disordered region. Basic residues predominate over residues 32–42 (LHHHHHHHHHQ). Residues 109–116 (PKKETRLK) carry the Nuclear localization signal motif. Residues 122–144 (KDHEDQPHPLHQNPTKPDSDSDK) are disordered. The GATA-type zinc finger occupies 226–280 (NGVIRVCSDCNTTKTPLWRSGPRGPKSLCNACGIRQRKARRAAMAAAAAAGDQEV). Residues 289-353 (LPLKKKLQNK…KSTTSSNSSI (65 aa)) are disordered. Basic residues predominate over residues 291–302 (LKKKLQNKKKRS). Positions 343 to 353 (SKSTTSSNSSI) are enriched in low complexity.

It belongs to the type IV zinc-finger family. Class B subfamily. As to quaternary structure, interacts with SNL1. Forms heterodimers with GATA18. In terms of tissue distribution, expressed predominantly in leaves, and barely in stems, flowers and siliques.

The protein localises to the nucleus. Transcriptional regulator that specifically binds 5'-GATA-3' or 5'-GAT-3' motifs within gene promoters. Involved in the modulation of chloroplast development, growth and division in a cytokinin-dependent manner. Repressor of the gibberellic acid (GA) signaling pathway that represses flowering and modulates greening, in a SOC1-dependent manner. Prevents the accumulation of SOC1 during flowering. Promotes chlorophyll biosynthesis throughout the plant, by regulating chlorophyll biosynthetic genes (e.g. HEMA1 and GUN4) and chloroplast localized glutamate synthase (e.g. GLU1). Involved in the regulation of sugar-sensing genes (e.g. HXK1, HXK2, STP13 and PLT6). Regulator of germination, senescence, elongation growth and flowering time. Also influences leaf starch content. The sequence is that of GATA transcription factor 21 from Arabidopsis thaliana (Mouse-ear cress).